The following is a 102-amino-acid chain: Circadian clock oscillator protein KaiB (102 aa).

The protein belongs to the KaiB family. As to quaternary structure, undergoes a major conformational rearrangment; in the free state forms homotetramers with 2 dimers. When bound to the CI domain of KaiC switches to a monomeric thioredoxin-fold (KaiB(fs)). Monomers, homodimers and homotetramers are detected in solution; at low concentrations only monomers are seen. In vitro forms KaiC(6):KaiB(1) and KaiC(6):KaiB(6) complexes. Only associates with 'Ser-431'-phosphorylated KaiC (and not with doubly phosphorylated KaiC). Complex formation between KaiB and KaiC is regulated by the phosphorylation state of KaiC and by an ATP hydrolysis-driven conformation change in the CI ring of KaiC; complex formation is slow. Slow complex formation is crucial for the timing of the circadian period. In low resolution cryo-EM forms a KaiC(6):KaiB(6) complex. The KaiABC complex composition changes during the circadian cycle to control KaiC phosphorylation. Complexes KaiC(6), KaiA(2-4):KaiC(6), KaiB(6):KaiC(6) and KaiC(6):KaiB(6):KaiA(12) are among the most important forms, many form cooperatively. The KaiB:KaiC complex is more prevalent at 16 hours (in the dark) than at 4 hours (in the light) in the circadian cycle. The KaiA:KaiB complex is only found at 20-24 hours in the circadian cycle (subjective night). Binds to the CI domain of KaiC; SasA and KaiB compete to bind to the CI domain.

The protein localises to the cytoplasm. The protein resides in the cell membrane. In terms of biological role, key component of the KaiABC oscillator complex, which constitutes the main circadian regulator in cyanobacteria. Complex composition changes during the circadian cycle to control KaiC phosphorylation. KaiA stimulates KaiC autophosphorylation, while KaiB sequesters KaiA, leading to KaiC autodephosphorylation. KaiA binding to the KaiC CII domain yields KaiA(2-4):KaiC(6) complexes which stimulate KaiC autophosphorylation. Phospho-Ser-431 KaiC accumulation triggers binding of KaiB to form the KaiB(6):KaiC(6) complex, leading to changes in the output regulators CikA and SasA. KaiB switches to a thioredoxin-like fold (KaiB(fs)) in complex with KaiC. KaiB(6):KaiC(6) formation exposes a site for KaiA binding that sequesters KaiA from the CII domain, making the KaiC(6):KaiB(6):KaiA(12) complex that results in KaiC autodephosphorylation. Complete dephosphorylation of KaiC leads to dissociation of KaiA(2):KaiB(1), completing 1 cycle of the Kai oscillator. Its function is as follows. Circadian oscillations can be generated in vitro by incubating KaiA, KaiB and KaiC with 1 mM ATP. The cycle is self-sustainable for at least 3 cycles and resistant to temperature changes. A very robust clock is reconstituted with KaiA, KaiB, KaiC, SasA, CikA and RpaA; output is measured by transcription from an appropriate reporter. A metamorphic protein which reversibly switches between an inactive tetrameric fold and a rare, thioredoxin-like monomeric fold (KaiB(fs)). KaiB(fs) binds phospho-KaiC, KaiA and CikA. KaiA and CikA compete for binding to KaiB(fs), and KaiB(fs) and SasA compete for binding to KaiC, thus the clock oscillator and output signal pathway are tightly coupled. This chain is Circadian clock oscillator protein KaiB, found in Synechococcus elongatus (strain ATCC 33912 / PCC 7942 / FACHB-805) (Anacystis nidulans R2).